The chain runs to 229 residues: Protein-L-isoaspartate O-methyltransferase (229 aa).

Ser-65 is an active-site residue.

This sequence belongs to the methyltransferase superfamily. L-isoaspartyl/D-aspartyl protein methyltransferase family.

The protein localises to the cytoplasm. The enzyme catalyses [protein]-L-isoaspartate + S-adenosyl-L-methionine = [protein]-L-isoaspartate alpha-methyl ester + S-adenosyl-L-homocysteine. Functionally, catalyzes the methyl esterification of L-isoaspartyl residues in peptides and proteins that result from spontaneous decomposition of normal L-aspartyl and L-asparaginyl residues. It plays a role in the repair and/or degradation of damaged proteins. This Chlorobium phaeovibrioides (strain DSM 265 / 1930) (Prosthecochloris vibrioformis (strain DSM 265)) protein is Protein-L-isoaspartate O-methyltransferase.